The primary structure comprises 149 residues: Calmodulin (149 aa).

At alanine 2 the chain carries N-acetylalanine. EF-hand domains lie at 8-43 (EQIA…LGQN), 44-79 (PTEA…KMKD), 81-116 (DSEE…LGEK), and 117-149 (LTDE…MTSK). 14 residues coordinate Ca(2+): aspartate 21, aspartate 23, aspartate 25, threonine 27, glutamate 32, aspartate 57, aspartate 59, aspartate 61, threonine 63, glutamate 68, aspartate 94, aspartate 96, asparagine 98, and glutamate 105. The residue at position 116 (lysine 116) is an N6,N6,N6-trimethyllysine. Residues aspartate 130, aspartate 132, aspartate 134, glutamine 136, and glutamate 141 each contribute to the Ca(2+) site.

It belongs to the calmodulin family.

Functionally, calmodulin mediates the control of a large number of enzymes, ion channels and other proteins by Ca(2+). Among the enzymes to be stimulated by the calmodulin-Ca(2+) complex are a number of protein kinases and phosphatases. The polypeptide is Calmodulin (Pyuridae sp. (Sea squirt)).